Reading from the N-terminus, the 574-residue chain is Arginine--tRNA ligase (574 aa).

Residues 121 to 131 carry the 'HIGH' region motif; that stretch reads PNIAKEMHIGH.

Belongs to the class-I aminoacyl-tRNA synthetase family. As to quaternary structure, monomer.

Its subcellular location is the cytoplasm. It catalyses the reaction tRNA(Arg) + L-arginine + ATP = L-arginyl-tRNA(Arg) + AMP + diphosphate. This is Arginine--tRNA ligase from Buchnera aphidicola subsp. Acyrthosiphon pisum (strain Tuc7).